We begin with the raw amino-acid sequence, 701 residues long: Elongation factor G (701 aa).

A tr-type G domain is found at 11–287 (NKVRNIGIMA…AVVDYLPSPL (277 aa)). GTP is bound by residues 20–27 (AHIDAGKT), 84–88 (DTPGH), and 138–141 (NKMD).

Belongs to the TRAFAC class translation factor GTPase superfamily. Classic translation factor GTPase family. EF-G/EF-2 subfamily.

It localises to the cytoplasm. Functionally, catalyzes the GTP-dependent ribosomal translocation step during translation elongation. During this step, the ribosome changes from the pre-translocational (PRE) to the post-translocational (POST) state as the newly formed A-site-bound peptidyl-tRNA and P-site-bound deacylated tRNA move to the P and E sites, respectively. Catalyzes the coordinated movement of the two tRNA molecules, the mRNA and conformational changes in the ribosome. The protein is Elongation factor G of Mycobacterium sp. (strain JLS).